The sequence spans 171 residues: Mitoferrin-1 (171 aa).

The interval 1-40 (MELRRGGVGSQARARRMDGDSRDGGGGCKDAGSEDYENLP) is disordered. The stretch at 43–131 (ASLSTHMTAG…FACYENMKRT (89 aa)) is one Solcar repeat. The next 3 membrane-spanning stretches (helical) occupy residues 45–64 (LSTHMTAGAMAGILEHSVMY), 105–125 (RGLNVMMMGAGPAHAMYFACY), and 143–163 (HLANGICKRLSGVRKVSPSTD).

This sequence belongs to the mitochondrial carrier (TC 2.A.29) family. Interacts with ACB10; this interaction stabilizes SLC25A37 and enhances the function of SLC25A37 to import mitochondrial iron during erythroid differentiation.

It is found in the mitochondrion inner membrane. The enzyme catalyses Fe(2+)(in) = Fe(2+)(out). Its function is as follows. Mitochondrial iron transporter that specifically mediates iron uptake in developing erythroid cells, thereby playing an essential role in heme biosynthesis. This Bos taurus (Bovine) protein is Mitoferrin-1 (SLC25A37).